A 30-amino-acid chain; its full sequence is 2S seed storage-like protein (30 aa).

The protein belongs to the 2S seed storage albumins family. As to quaternary structure, the mature protein is a heterodimer of a small and a large chain linked by 2 disulfide bonds. As to expression, extracted from castor bean.

Functionally, this is a 2S seed storage protein. Inhibits spore germination in R.solani and F.oxysporum. Exhibits anti-trypsin activity. The chain is 2S seed storage-like protein from Ricinus communis (Castor bean).